Here is a 63-residue protein sequence, read N- to C-terminus: Large ribosomal subunit protein uL29 (63 aa).

Belongs to the universal ribosomal protein uL29 family.

This chain is Large ribosomal subunit protein uL29, found in Pectobacterium atrosepticum (strain SCRI 1043 / ATCC BAA-672) (Erwinia carotovora subsp. atroseptica).